The chain runs to 156 residues: Ribosomal RNA large subunit methyltransferase H (156 aa).

S-adenosyl-L-methionine-binding positions include Leu-73, Gly-104, and 123-128; that span reads LSALTL.

The protein belongs to the RNA methyltransferase RlmH family. Homodimer.

It localises to the cytoplasm. The catalysed reaction is pseudouridine(1915) in 23S rRNA + S-adenosyl-L-methionine = N(3)-methylpseudouridine(1915) in 23S rRNA + S-adenosyl-L-homocysteine + H(+). Specifically methylates the pseudouridine at position 1915 (m3Psi1915) in 23S rRNA. This is Ribosomal RNA large subunit methyltransferase H from Shewanella baltica (strain OS223).